The chain runs to 311 residues: Mediator of RNA polymerase II transcription subunit 27 (311 aa).

Serine 132 is subject to Phosphoserine. At lysine 134 the chain carries N6-methyllysine.

This sequence belongs to the Mediator complex subunit 27 family. Component of the Mediator complex, which is composed of MED1, MED4, MED6, MED7, MED8, MED9, MED10, MED11, MED12, MED13, MED13L, MED14, MED15, MED16, MED17, MED18, MED19, MED20, MED21, MED22, MED23, MED24, MED25, MED26, MED27, MED29, MED30, MED31, CCNC, CDK8 and CDC2L6/CDK11. The MED12, MED13, CCNC and CDK8 subunits form a distinct module termed the CDK8 module. Mediator containing the CDK8 module is less active than Mediator lacking this module in supporting transcriptional activation. Individual preparations of the Mediator complex lacking one or more distinct subunits have been variously termed ARC, CRSP, DRIP, PC2, SMCC and TRAP.

The protein localises to the nucleus. Component of the Mediator complex, a coactivator involved in the regulated transcription of nearly all RNA polymerase II-dependent genes. Mediator functions as a bridge to convey information from gene-specific regulatory proteins to the basal RNA polymerase II transcription machinery. Mediator is recruited to promoters by direct interactions with regulatory proteins and serves as a scaffold for the assembly of a functional preinitiation complex with RNA polymerase II and the general transcription factors. This is Mediator of RNA polymerase II transcription subunit 27 (MED27) from Sus scrofa (Pig).